Here is a 401-residue protein sequence, read N- to C-terminus: 26S proteasome regulatory subunit 6A (401 aa).

189–196 (GPPGTGKT) is a binding site for ATP.

This sequence belongs to the AAA ATPase family. The 26S proteasome consists of a 20S proteasome core and two 19S regulatory subunits. The 20S proteasome core is composed of 28 subunits that are arranged in four stacked rings, resulting in a barrel-shaped structure. The two end rings are each formed by seven alpha subunits, and the two central rings are each formed by seven beta subunits. The catalytic chamber with the active sites is on the inside of the barrel.

The protein localises to the cytoplasm. It localises to the nucleus. Its function is as follows. Acts as a regulatory subunit of the 26S proteasome which degrades poly-ubiquitinated proteins in the cytoplasm and in the nucleus. It is essential for the regulated turnover of proteins and for the removal of misfolded proteins. The proteasome is a multicatalytic proteinase complex that is characterized by its ability to cleave peptides with Arg, Phe, Tyr, Leu, and Glu adjacent to the leaving group at neutral or slightly basic pH. This Encephalitozoon cuniculi (strain GB-M1) (Microsporidian parasite) protein is 26S proteasome regulatory subunit 6A (RPT5).